The chain runs to 147 residues: Lysozyme C-1 (147 aa).

Positions 1-18 are cleaved as a signal peptide; sequence MKALLTLVFCLLPLAAQG. The C-type lysozyme domain maps to 19-147; that stretch reads KVYSRCELAA…VSKWIRGCRL (129 aa). 4 disulfides stabilise this stretch: C24/C145, C48/C133, C82/C98, and C94/C112. Residues E53 and D70 contribute to the active site.

This sequence belongs to the glycosyl hydrolase 22 family.

The protein resides in the secreted. It catalyses the reaction Hydrolysis of (1-&gt;4)-beta-linkages between N-acetylmuramic acid and N-acetyl-D-glucosamine residues in a peptidoglycan and between N-acetyl-D-glucosamine residues in chitodextrins.. Its function is as follows. Lysozymes have primarily a bacteriolytic function; those in tissues and body fluids are associated with the monocyte-macrophage system and enhance the activity of immunoagents. This Anas platyrhynchos (Mallard) protein is Lysozyme C-1.